The following is a 574-amino-acid chain: Cyclomaltodextrinase (574 aa).

Ca(2+) is bound by residues N144, D146, N149, D150, G168, and D170. The substrate site is built by H243 and R323. Catalysis depends on D325, which acts as the Nucleophile. E354 serves as the catalytic Proton donor. Substrate contacts are provided by residues 420-421 (HD), D465, and R469.

It belongs to the glycosyl hydrolase 13 family. As to quaternary structure, monomer. The cofactor is Ca(2+).

It catalyses the reaction cyclomaltodextrin + H2O = linear maltodextrin. Hydrolyzes cyclodextrins. Can also act on linear maltodextrins, with the exception of maltose. The protein is Cyclomaltodextrinase of Thermoanaerobacter pseudethanolicus (strain ATCC 33223 / 39E) (Clostridium thermohydrosulfuricum).